Here is a 140-residue protein sequence, read N- to C-terminus: Phosphoribosyl-AMP cyclohydrolase (140 aa).

Asp78 contributes to the Mg(2+) binding site. Residue Cys79 participates in Zn(2+) binding. Mg(2+)-binding residues include Asp80 and Asp82. Zn(2+) contacts are provided by Cys96 and Cys103.

This sequence belongs to the PRA-CH family. As to quaternary structure, homodimer. Mg(2+) is required as a cofactor. Zn(2+) serves as cofactor.

It is found in the cytoplasm. It catalyses the reaction 1-(5-phospho-beta-D-ribosyl)-5'-AMP + H2O = 1-(5-phospho-beta-D-ribosyl)-5-[(5-phospho-beta-D-ribosylamino)methylideneamino]imidazole-4-carboxamide. It participates in amino-acid biosynthesis; L-histidine biosynthesis; L-histidine from 5-phospho-alpha-D-ribose 1-diphosphate: step 3/9. In terms of biological role, catalyzes the hydrolysis of the adenine ring of phosphoribosyl-AMP. The sequence is that of Phosphoribosyl-AMP cyclohydrolase from Ralstonia nicotianae (strain ATCC BAA-1114 / GMI1000) (Ralstonia solanacearum).